A 1407-amino-acid chain; its full sequence is DNA-directed RNA polymerase subunit beta' (1407 aa).

The Zn(2+) site is built by Cys70, Cys72, Cys85, and Cys88. Mg(2+) contacts are provided by Asp460, Asp462, and Asp464. 4 residues coordinate Zn(2+): Cys814, Cys888, Cys895, and Cys898.

This sequence belongs to the RNA polymerase beta' chain family. As to quaternary structure, the RNAP catalytic core consists of 2 alpha, 1 beta, 1 beta' and 1 omega subunit. When a sigma factor is associated with the core the holoenzyme is formed, which can initiate transcription. Requires Mg(2+) as cofactor. Zn(2+) serves as cofactor.

It catalyses the reaction RNA(n) + a ribonucleoside 5'-triphosphate = RNA(n+1) + diphosphate. Its function is as follows. DNA-dependent RNA polymerase catalyzes the transcription of DNA into RNA using the four ribonucleoside triphosphates as substrates. In Salmonella arizonae (strain ATCC BAA-731 / CDC346-86 / RSK2980), this protein is DNA-directed RNA polymerase subunit beta'.